Consider the following 161-residue polypeptide: Nucleotide-binding protein PBPRA2024 (161 aa).

It belongs to the YajQ family.

Its function is as follows. Nucleotide-binding protein. The sequence is that of Nucleotide-binding protein PBPRA2024 from Photobacterium profundum (strain SS9).